Reading from the N-terminus, the 235-residue chain is Protein fmp52-1, mitochondrial (235 aa).

Residues 1 to 36 (MANTALIGCTGMVGSFILNNLLAHPSVARVDTISRR) constitute a mitochondrion transit peptide.

It belongs to the FMP52 family.

The protein localises to the mitochondrion outer membrane. This chain is Protein fmp52-1, mitochondrial (fmp521), found in Aspergillus oryzae (strain ATCC 42149 / RIB 40) (Yellow koji mold).